Consider the following 463-residue polypeptide: V-type proton ATPase subunit S1 (463 aa).

A signal peptide spans 1 to 32 (MMAATVVSRIRTGTGRAPVMWLSLSLVAVAAA). A propeptide spanning residues 33–225 (VATEQQVPLV…TAVRPSRVAR (193 aa)) is cleaved from the precursor. The Lumenal portion of the chain corresponds to 33-412 (VATEQQVPLV…EQFSYASDCA (380 aa)). N-linked (GlcNAc...) asparagine glycosylation is found at Asn-164, Asn-255, Asn-267, Asn-290, Asn-297, Asn-344, Asn-351, and Asn-399. Cysteines 365 and 411 form a disulfide. The chain crosses the membrane as a helical span at residues 413-433 (GFFSPGIWMGLLTTLFMLFIF). Over 434–463 (TYGLHMILSLKTMDRFDDHKGPTITLTQIV) the chain is Cytoplasmic.

Belongs to the vacuolar ATPase subunit S1 family. In terms of assembly, accessory component of the multisubunit proton-transporting vacuolar (V)-ATPase protein pump. Interacts (via N-terminus) with ATP6AP2 (via N-terminus). Interacts with RNASEK. Interacts with TMEM106B (via C-terminus). Post-translationally, N-glycosylated. As to expression, expressed in brain cortex (at protein level). Highly expressed in islets of Langerhans. Expressed in pancreatic acini, pituitary gland, adrenal gland, lung, brain and bone marrow.

Its subcellular location is the endoplasmic reticulum membrane. The protein localises to the endoplasmic reticulum-Golgi intermediate compartment membrane. It localises to the cytoplasmic vesicle. The protein resides in the secretory vesicle. It is found in the synaptic vesicle membrane. Its subcellular location is the clathrin-coated vesicle membrane. Its function is as follows. Accessory subunit of the proton-transporting vacuolar (V)-ATPase protein pump, which is required for luminal acidification of secretory vesicles. Guides the V-type ATPase into specialized subcellular compartments, such as neuroendocrine regulated secretory vesicles or the ruffled border of the osteoclast, thereby regulating its activity. Involved in membrane trafficking and Ca(2+)-dependent membrane fusion. May play a role in the assembly of the V-type ATPase complex. In aerobic conditions, involved in intracellular iron homeostasis, thus triggering the activity of Fe(2+) prolyl hydroxylase (PHD) enzymes, and leading to HIF1A hydroxylation and subsequent proteasomal degradation. In islets of Langerhans cells, may regulate the acidification of dense-core secretory granules. The protein is V-type proton ATPase subunit S1 (Atp6ap1) of Mus musculus (Mouse).